The sequence spans 364 residues: Pectinesterase 1 (364 aa).

Positions 1 to 22 (MSCIAVEAVLLGILLYIPIVLS) are cleaved as a signal peptide. N-linked (GlcNAc...) asparagine glycosylation is present at N103. The active site involves D220.

The protein belongs to the pectinesterase family. Glycosylated. As to expression, expressed in pollen.

It localises to the secreted. The enzyme catalyses [(1-&gt;4)-alpha-D-galacturonosyl methyl ester](n) + n H2O = [(1-&gt;4)-alpha-D-galacturonosyl](n) + n methanol + n H(+). The protein operates within glycan metabolism; pectin degradation; 2-dehydro-3-deoxy-D-gluconate from pectin: step 1/5. Functionally, catalyzes the demethylesterification of homogalacturonan components of pectin. May be involved in pollen tube development. In Olea europaea (Common olive), this protein is Pectinesterase 1.